Consider the following 694-residue polypeptide: Acetolactate synthase catalytic subunit, mitochondrial (694 aa).

The transit peptide at 1-42 (MLRSRQATNALRAVGQTRPLRSQTAVAFTQSLNKVPSNRRSE) directs the protein to the mitochondrion. Residues 45-58 (VATASSTASGAFNS) show a composition bias toward low complexity. Positions 45–69 (VATASSTASGAFNSQVRPTPSPTFN) are disordered. The segment covering 59-69 (QVRPTPSPTFN) has biased composition (polar residues). E140 contributes to the thiamine diphosphate binding site. FAD contacts are provided by residues R242, 358-379 (HGSA…LGGR), and 410-429 (EIMP…IVGD). Residues 505-585 (QHQMWTAQHF…VKVIVLNNEE (81 aa)) are thiamine pyrophosphate binding. D556, N583, and E585 together coordinate Mg(2+).

The protein belongs to the TPP enzyme family. As to quaternary structure, homodimer. Mg(2+) serves as cofactor. Requires thiamine diphosphate as cofactor.

It localises to the mitochondrion. The catalysed reaction is 2 pyruvate + H(+) = (2S)-2-acetolactate + CO2. The enzyme catalyses 2-oxobutanoate + pyruvate + H(+) = (S)-2-ethyl-2-hydroxy-3-oxobutanoate + CO2. It participates in amino-acid biosynthesis; L-isoleucine biosynthesis; L-isoleucine from 2-oxobutanoate: step 1/4. The protein operates within amino-acid biosynthesis; L-valine biosynthesis; L-valine from pyruvate: step 1/4. Acetolactate synthase catalytic subunit, mitochondrial; part of the gene cluster that mediates the biosynthesis of chlorflavonin, a fungal flavonoid with acetolactate synthase inhibitory activity. Is not direcly involved in chlorflavonin biosynthesis but acts as a self-resistant protein that effectively confers chlorflavonin resistance to the native host. As a catalytic subunit of mitochondrial acetolactate synthase, catalyzes the first of a series of common steps in the biosynthesis of the branched-chain amino acids. Catalyzes the irreversible decarboxylation of pyruvate to a bound hydroxyethyl group that then condenses with either a second pyruvate molecule to form 2-acetolactate (AL) or with 2-ketobutyrate to form 2-aceto-2-hydroxybutyrate (AHB). The first product is the precursor for valine and leucine biosynthesis, while the second leads to isoleucine. This Aspergillus candidus protein is Acetolactate synthase catalytic subunit, mitochondrial.